The sequence spans 407 residues: Probable endo-beta-1,4-glucanase celB (407 aa).

The first 18 residues, 1 to 18 (MAQTLAAASLVLVPLVTA), serve as a signal peptide directing secretion. Residue asparagine 136 is glycosylated (N-linked (GlcNAc...) asparagine). Glutamate 216 functions as the Nucleophile in the catalytic mechanism. The Proton donor role is filled by glutamate 221.

The protein belongs to the glycosyl hydrolase 7 (cellulase C) family.

The protein localises to the secreted. It catalyses the reaction Endohydrolysis of (1-&gt;4)-beta-D-glucosidic linkages in cellulose, lichenin and cereal beta-D-glucans.. Its function is as follows. Has endoglucanase activity on substrates containing beta-1,4 glycosidic bonds, like in carboxymethylcellulose (CMC), hydroxyethylcellulose (HEC) and beta-glucan. Involved in the degradation of complex natural cellulosic substrates. This chain is Probable endo-beta-1,4-glucanase celB (celB), found in Aspergillus fumigatus (strain ATCC MYA-4609 / CBS 101355 / FGSC A1100 / Af293) (Neosartorya fumigata).